We begin with the raw amino-acid sequence, 583 residues long: MEVAANCSLRVKRPLLDPRFEGYKLSLEPLPCYQLELDAAVAEVKLRDDQYTLEHMHAFGMYNYLHCDSWYQDSVYYIDTLGRIMNLTVMLDTALGKPREVFRLPTDLTACDNRLCASIHFSSSTWVTLSDGTGRLYVIGTGERGNSASEKWEIMFNEELGDPFIIIHSISLLNAEEHSIATLLLRIEKEELDMKGSGFYVSLEWVTISKKNQDNKKYEIIKRDILRGKSVPHYAAIEPDGNGLMIVSYKSLTFVQAGQDLEENMDEDISEKIKEPLYYWQQTEDDLTVTIRLPEDSTKEDIQIQFLPDHINIVLKDHQFLEGKLYSSIDHESSTWIIKESNSLEISLIKKNEGLTWPELVIGDKQGELIRDSAQCAAIAERLMHLTSEELNPNPDKEKPPCNAQELEECDIFFEESSSLCRFDGNTLKTTHVVNLGSNQYLFSVIVDPKEMPCFCLRHDVDALLWQPHSSKQDDMWEHIATFNALGYVQASKRDKKFFACAPNYSYAALCECLRRVFIYRQPAPMSTVLYNRKEGRQVGQVAKQQVASLETNDPILGFQATNERLFVLTTKNLFLIKVNTEN.

Serine 8 is modified (phosphoserine). The CS domain occupies 273 to 361 (IKEPLYYWQQ…NEGLTWPELV (89 aa)). Serine 388 carries the post-translational modification Phosphoserine.

Isoform 1 is specifically expressed in leukemias and a variety of solid tumor cell lines and is also detected in testis and heart. Isoform 2 is predominantly expressed in testis and weakly expressed in tumor cells.

The protein localises to the cytoplasm. It is found in the nucleus. In Homo sapiens (Human), this protein is NudC domain-containing protein 1.